Reading from the N-terminus, the 111-residue chain is Probable monothiol glutaredoxin 2 (111 aa).

Positions 7–109 (LKFIQNAIKK…KMLKDETKLI (103 aa)) constitute a Glutaredoxin domain. Lysine 24 is a binding site for glutathione. Cysteine 32 serves as a coordination point for [2Fe-2S] cluster. Residues arginine 61, phenylalanine 73, and 86–87 (CD) contribute to the glutathione site.

This sequence belongs to the glutaredoxin family. Monothiol subfamily.

This is Probable monothiol glutaredoxin 2 (grxC2) from Rickettsia typhi (strain ATCC VR-144 / Wilmington).